Here is a 415-residue protein sequence, read N- to C-terminus: Multidrug resistance protein MdtA (415 aa).

An N-terminal signal peptide occupies residues 1 to 21; the sequence is MKGSYKSRWVIVIVVVIAAIA. 2 disordered regions span residues 32–60 and 392–415; these read SRSAAPGATKQAQQSPASGRRGMRSGPLA and EAQSATTPEEKATSREYAKKGARS. The span at 399-415 shows a compositional bias: basic and acidic residues; sequence PEEKATSREYAKKGARS.

It belongs to the membrane fusion protein (MFP) (TC 8.A.1) family. Part of a tripartite efflux system composed of MdtA, MdtB and MdtC.

The protein resides in the cell inner membrane. Its function is as follows. The MdtABC tripartite complex confers resistance against novobiocin and deoxycholate. The sequence is that of Multidrug resistance protein MdtA from Escherichia coli O81 (strain ED1a).